The primary structure comprises 276 residues: Prohibitin 1 (276 aa).

This sequence belongs to the prohibitin family.

Functionally, required for larval metabolism or for the progression of the larva into a pupa. This Drosophila melanogaster (Fruit fly) protein is Prohibitin 1.